A 1235-amino-acid chain; its full sequence is Major DNA-binding protein (1235 aa).

Residues 536–584 form a disordered region; sequence GGLDGKGDDGVPGGGAGGGGGRDVSGGPSDGLGGGRGGGGGGDSGGMMG. The segment covering 545-584 has biased composition (gly residues); that stretch reads GVPGGGAGGGGGRDVSGGPSDGLGGGRGGGGGGDSGGMMG. Residues 846 to 847 carry the Required for filament formation motif; that stretch reads FW. A compositionally biased stretch (gly residues) spans 1214-1226; sequence GVGGSSGGGGGSG. Residues 1214–1235 are disordered; sequence GVGGSSGGGGGSGLLPAKRSRL. The interval 1232-1235 is required for nuclear localization; sequence RSRL.

This sequence belongs to the herpesviridae major DNA-binding protein family. As to quaternary structure, homooligomers. Forms double-helical filaments necessary for the formation of replication compartments within the host nucleus. Interacts with the origin-binding protein. Interacts with the helicase primase complex; this interaction stimulates primer synthesis activity of the helicase-primase complex. Interacts with the DNA polymerase. Interacts with the alkaline exonuclease; this interaction increases its nuclease processivity.

It localises to the host nucleus. Its function is as follows. Plays several crucial roles in viral infection. Participates in the opening of the viral DNA origin to initiate replication by interacting with the origin-binding protein. May disrupt loops, hairpins and other secondary structures present on ssDNA to reduce and eliminate pausing of viral DNA polymerase at specific sites during elongation. Promotes viral DNA recombination by performing strand-transfer, characterized by the ability to transfer a DNA strand from a linear duplex to a complementary single-stranded DNA circle. Can also catalyze the renaturation of complementary single strands. Additionally, reorganizes the host cell nucleus, leading to the formation of prereplicative sites and replication compartments. This process is driven by the protein which can form double-helical filaments in the absence of DNA. The chain is Major DNA-binding protein from Homo sapiens (Human).